Reading from the N-terminus, the 246-residue chain is Neuromodulin (246 aa).

Positions 1 to 246 are disordered; that stretch reads MLCCMRRTKQ…EESKADQENA (246 aa). Residues cysteine 3 and cysteine 4 are each lipidated (S-palmitoyl cysteine). The span at 9–33 shows a compositional bias: basic and acidic residues; that stretch reads KQVEKNEDGDQKIEQDGIKPEDKAH. An IQ domain is found at 32–61; sequence AHKAATKIQASFRGHITRKKLKGEKKADAP. Composition is skewed to low complexity over residues 87–99 and 125–157; these read ASAA…ADSA and SEQP…KAST. The segment covering 164 to 176 has biased composition (basic and acidic residues); that stretch reads KADEAQDKEEPKQ. A compositionally biased stretch (low complexity) spans 177 to 203; sequence ADVPAADTTATTTPAAEDATAKATAQP. 2 stretches are compositionally biased toward basic and acidic residues: residues 213–225 and 237–246; these read TEEK…ETKP and EESKADQENA.

This sequence belongs to the neuromodulin family. In terms of assembly, binds calmodulin with a greater affinity in the absence of Ca(2+) than in its presence. Post-translationally, palmitoylated. Palmitoylation is essential for plasma membrane association. Expressed in neurons.

Its subcellular location is the cell membrane. The protein resides in the cell projection. The protein localises to the growth cone membrane. It localises to the synapse. It is found in the filopodium membrane. In terms of biological role, this protein is associated with nerve growth. It is a major component of the motile 'growth cones' that form the tips of elongating axons. Plays a role in axonal and dendritic filopodia induction. The sequence is that of Neuromodulin (GAP43) from Gallus gallus (Chicken).